The following is a 272-amino-acid chain: Large ribosomal subunit protein uL4 (272 aa).

Belongs to the universal ribosomal protein uL4 family. In terms of assembly, part of the 50S ribosomal subunit.

In terms of biological role, one of the primary rRNA binding proteins, this protein initially binds near the 5'-end of the 23S rRNA. It is important during the early stages of 50S assembly. It makes multiple contacts with different domains of the 23S rRNA in the assembled 50S subunit and ribosome. Forms part of the polypeptide exit tunnel. The protein is Large ribosomal subunit protein uL4 of Aeropyrum pernix (strain ATCC 700893 / DSM 11879 / JCM 9820 / NBRC 100138 / K1).